Here is a 433-residue protein sequence, read N- to C-terminus: Protein FAM98B (433 aa).

A disordered region spans residues 303-433 (GRVPDRGGRP…GGGGGGYRRY (131 aa)). A compositionally biased stretch (basic and acidic residues) spans 305 to 314 (VPDRGGRPNE). Positions 331–433 (GGGGRGGWGG…GGGGGGYRRY (103 aa)) are enriched in gly residues.

It belongs to the FAM98 family. As to quaternary structure, homodimer. Component of the tRNA-splicing ligase complex. Interacts with FAM98A. As to expression, expressed strongly in colorectal cancer tissues compared to wild-type colon samples (at protein level). Expressed strongly in colorectal cancer tissues compared to wild-type colon samples.

The protein localises to the nucleus. Its subcellular location is the cytoplasm. Its function is as follows. Positively stimulates PRMT1-induced protein arginine dimethylated arginine methylation. This chain is Protein FAM98B (FAM98B), found in Homo sapiens (Human).